The sequence spans 129 residues: Transcriptional regulator WhiB2 (129 aa).

The segment at 23-45 (SHAPHIDTGSTPTGAAGRPQLSL) is disordered. The region spanning 66 to 123 (LCAQTDPEAFFPEKGGSTREAKRICQGCEVRDACLEYALAHDERFGIWGGLSERERRR) is the 4Fe-4S Wbl-type domain. [4Fe-4S] cluster is bound by residues Cys-67, Cys-90, Cys-93, and Cys-99.

Belongs to the WhiB family. [4Fe-4S] cluster is required as a cofactor. Post-translationally, the Fe-S cluster can be nitrosylated by nitric oxide (NO). In terms of processing, upon Fe-S cluster removal intramolecular disulfide bonds are formed.

The protein resides in the cytoplasm. Acts as a transcriptional regulator. Probably redox-responsive. The apo- but not holo-form probably binds DNA. The chain is Transcriptional regulator WhiB2 (whiB2) from Mycolicibacterium smegmatis (strain ATCC 700084 / mc(2)155) (Mycobacterium smegmatis).